A 488-amino-acid chain; its full sequence is HSPB1-associated protein 1 (488 aa).

The tract at residues 88 to 208 (ETTCNYVEAT…EDTPFLYPTR (121 aa)) is interaction with HSPB1. The 165-residue stretch at 124 to 288 (WAYADYKYFV…HLARVEEAIT (165 aa)) folds into the JmjC domain. The span at 369-379 (QTGSQNLTTGT) shows a compositional bias: polar residues. A disordered region spans residues 369 to 415 (QTGSQNLTTGTDKPEAASPFGPDLVPVAQRSEEPPSERGGIFGSDGK).

In terms of assembly, interacts with CRYAB and HSPB1. Widely expressed.

The protein resides in the cytoplasm. In terms of biological role, may play a role in cellular stress response. In Homo sapiens (Human), this protein is HSPB1-associated protein 1 (HSPBAP1).